The following is a 223-amino-acid chain: MDELKKLAGVTAAKYVKNGMIVGLGTGSTAYFFVEEIGRRVKEEGLQVVGVTTSNRTTEQARGLGIPLKSADDIDVIDVTVDGADEVDPDFNGIKGGGGALLMEKIVATPTKEYIWVVDESKLVETLGAFKLPVEVVRYGSERLFRVFKSKGYCPSFRETEGDRFITDMGNYIIDLDLKKIEDPKQLANELDHTVGVVEHGLFNSMVNKVIVAGKNGLDILEK.

Substrate contacts are provided by residues 26-29 (TGST), 82-85 (DGAD), and 95-98 (KGGG). Residue glutamate 104 is the Proton acceptor of the active site. Lysine 122 contributes to the substrate binding site.

It belongs to the ribose 5-phosphate isomerase family. In terms of assembly, homodimer.

The catalysed reaction is aldehydo-D-ribose 5-phosphate = D-ribulose 5-phosphate. Its pathway is carbohydrate degradation; pentose phosphate pathway; D-ribose 5-phosphate from D-ribulose 5-phosphate (non-oxidative stage): step 1/1. In terms of biological role, catalyzes the reversible conversion of ribose-5-phosphate to ribulose 5-phosphate. The chain is Ribose-5-phosphate isomerase A from Streptococcus agalactiae serotype III (strain NEM316).